We begin with the raw amino-acid sequence, 115 residues long: Superoxide reductase (115 aa).

Fe cation-binding residues include E14, H16, H41, H47, C102, and H105.

The protein belongs to the desulfoferrodoxin family. As to quaternary structure, homotetramer. The cofactor is Fe cation.

It catalyses the reaction reduced [rubredoxin] + superoxide + 2 H(+) = oxidized [rubredoxin] + H2O2. Uses electrons from reduced NADP, by way of rubredoxin and an oxidoreductase, to catalyze the reduction of superoxide to hydrogen peroxide. The chain is Superoxide reductase (sorA) from Pyrococcus horikoshii (strain ATCC 700860 / DSM 12428 / JCM 9974 / NBRC 100139 / OT-3).